We begin with the raw amino-acid sequence, 1276 residues long: cGMP-specific 3',5'-cyclic phosphodiesterase (1276 aa).

Disordered stretches follow at residues Met-1–Gly-76, Asn-91–Val-185, and Ala-241–Ser-260. Low complexity-rich tracts occupy residues Ser-12–Ser-47 and Thr-57–Gly-76. Over residues Ala-109–Thr-124 the composition is skewed to pro residues. The segment covering Ser-129 to Val-140 has biased composition (basic and acidic residues). Polar residues predominate over residues Ala-147–Glu-166. Composition is skewed to low complexity over residues Ser-167–Ser-180 and Ser-249–Ser-260. GAF domains lie at Asp-290 to Ile-442 and Asn-474 to Ile-658. The 432-residue stretch at Ser-688–Val-1119 folds into the PDEase domain. His-764 functions as the Proton donor in the catalytic mechanism. 4 residues coordinate a divalent metal cation: His-768, His-804, Asp-805, and Asp-1023. Disordered regions lie at residues Ala-1162 to Leu-1193 and Leu-1205 to Leu-1276. Basic and acidic residues-rich tracts occupy residues Asp-1171–Arg-1180 and Leu-1221–Ser-1233. Residues Gly-1248–Val-1263 show a composition bias toward low complexity. A compositionally biased stretch (basic residues) spans Ser-1266–Leu-1276. The residue at position 1273 (Cys-1273) is a Cysteine methyl ester. Residue Cys-1273 is the site of S-farnesyl cysteine attachment. A propeptide spans Ser-1274–Leu-1276 (removed in mature form).

It belongs to the cyclic nucleotide phosphodiesterase family. Interacts with PrBP. It depends on a divalent metal cation as a cofactor.

The protein resides in the cell membrane. The enzyme catalyses 3',5'-cyclic GMP + H2O = GMP + H(+). Its function is as follows. Has a role regulating cGMP transport in Malpighian tubule principal cells. The chain is cGMP-specific 3',5'-cyclic phosphodiesterase from Drosophila persimilis (Fruit fly).